Here is a 157-residue protein sequence, read N- to C-terminus: Glutathione peroxidase (157 aa).

Residue Cys35 is part of the active site.

This sequence belongs to the glutathione peroxidase family.

It carries out the reaction 2 glutathione + H2O2 = glutathione disulfide + 2 H2O. This is Glutathione peroxidase (gpo) from Lactococcus lactis subsp. cremoris (strain MG1363).